The sequence spans 438 residues: EF-hand calcium-binding domain-containing protein 3 (438 aa).

EF-hand domains lie at 47 to 82 (SQMA…LGMN) and 83 to 118 (LTKH…KNLF). The Ca(2+) site is built by aspartate 96, aspartate 98, aspartate 100, lysine 102, and aspartate 107. At tyrosine 279 the chain carries Phosphotyrosine. A compositionally biased stretch (low complexity) spans 405-415 (SSHNSRSSSSS). The tract at residues 405 to 438 (SSHNSRSSSSSDTSECYTDSGRKRKRKGLKGFQQ) is disordered. Basic residues predominate over residues 426–438 (RKRKRKGLKGFQQ).

The sequence is that of EF-hand calcium-binding domain-containing protein 3 (EFCAB3) from Homo sapiens (Human).